The following is a 1370-amino-acid chain: MAYSFTERKRIRKSFGNRESVLTVPYLLQMQKDAYIAFLQADRAPQKRMVEGLQAAFQNAFPIVSHNGFVEMKFIEYNLAKPAFDVRECQTRGLTFASAVRAKVQLIIYDRESSTSQSKVVKEVKEQEVYMGEVPLMTDKGSFVINGTERVIVSQLHRSPGVFFEHDKGKTHSSGKLLFSARIIPYRGSWLDFEFDPKDILYFRVDRRRKMPVTILLKAIGLNHESILANFFVFDNFRLMDSGAQMEFVAERMRGEVARFDLTDKAGKVVVAKDKRITVRHTRELEQSGTTSISVPEDFLIGRVVAKNIIDTDTGEIIAKANDELTELLLKKLRTAGIQNLQVLYTNELDQGAYISQTLRADETADEFAARVAIYRMMRPGEPPTEDAVQALFQRLFYNPDTYDLSRVGRMKFNARVGRDESTGPMVMTNEDILAVVKILVDLRNGNGEVDDIDHLGNRRVRCVGELAENQYRTGLARIEKAVKERLGQAEQEPLMPHDLINSKPISAALKEFFGASQLSQFMDQTNPLAEITHKRRVSALGPGGLTRERAGFEVRDVHVTHYGRVCPIETPEGPNIGLINSLALYARLNEYGFIETPYRRVADSKVTMEIDYLSAIEEGKYVIAQANAALDNEGRLTGDLVSAREKGESILVSAERVQYMDVSPAQIVSVAASLVPFLEHDDANRALMGANMSRQAVPVLRPEKPLVGTGIERVAAVDSGTVVTATRGGVVDYVDATRIVVRVNDAEALAGEIGVDIYNLIKYQRSNQNTNIHQRPIVKMGDKLAKGDVVADGASTDLGEIAIGQNMLIGFMPWNGYNFEDSILISERVVAEDRYTSIHIEELVVMARDTKLGSEEITRDIPNLSEQQLNRLDESGIIYVGAEVQPGDTLVGKVTPKGETTLTPEEKLLRAIFGEKASDVKDTSLRVSQGSSGTVIDVQVFTREGITRDKRAQQIIDDELKRYRLDLNDQLRIVEADAFDRIEKLLIGKIANGGPKKLAKGTKLDKAYLTDVEKYHWFDIRPADDEVASQLESIKNSMEQTRHSFDLSFEEKRKKLTQGDELPSGVLKMVKVYLAVKRRLQPGDKMAGRHGNKGVVSKIVPVEDMPHMADGTPCDIVLNPLGVPSRMNVGQVLEVHLGWAAKGLGQRIGDMLQAESKVAELRQFMDTLYNKSGRTEDLASLSDEQVVEMAQNLTTGVPFATPVFDGASEADIMTMLQLAYPDAVAKAKGLTPTRTQAQLYDGRTGDAFERTTTVGYMHFLKLHHLVDDKMHARSTGPYSLVTQQPLGGKAQFGGQRFGEMEVWALEAYGAAYVLQEMLTVKSDDVVGRTKVYESIVKGEHAITAGMPESFNVLVKEIRSLGIDMELERS.

Belongs to the RNA polymerase beta chain family. The RNAP catalytic core consists of 2 alpha, 1 beta, 1 beta' and 1 omega subunit. When a sigma factor is associated with the core the holoenzyme is formed, which can initiate transcription.

The enzyme catalyses RNA(n) + a ribonucleoside 5'-triphosphate = RNA(n+1) + diphosphate. In terms of biological role, DNA-dependent RNA polymerase catalyzes the transcription of DNA into RNA using the four ribonucleoside triphosphates as substrates. The polypeptide is DNA-directed RNA polymerase subunit beta (Polaromonas naphthalenivorans (strain CJ2)).